Here is a 347-residue protein sequence, read N- to C-terminus: Quinolinate synthase (347 aa).

Residues His-47 and Ser-68 each contribute to the iminosuccinate site. Cys-113 serves as a coordination point for [4Fe-4S] cluster. Iminosuccinate contacts are provided by residues Tyr-139–Asn-141 and Ser-156. Cys-200 lines the [4Fe-4S] cluster pocket. Residues His-226–Glu-228 and Thr-243 each bind iminosuccinate. Cys-297 is a binding site for [4Fe-4S] cluster.

Belongs to the quinolinate synthase family. Type 1 subfamily. It depends on [4Fe-4S] cluster as a cofactor.

Its subcellular location is the cytoplasm. The enzyme catalyses iminosuccinate + dihydroxyacetone phosphate = quinolinate + phosphate + 2 H2O + H(+). Its pathway is cofactor biosynthesis; NAD(+) biosynthesis; quinolinate from iminoaspartate: step 1/1. Catalyzes the condensation of iminoaspartate with dihydroxyacetone phosphate to form quinolinate. The polypeptide is Quinolinate synthase (Shigella flexneri).